The sequence spans 695 residues: DNA topoisomerase 4 subunit B (695 aa).

Positions 1–53 (MSSSDKIPSLFGDDDALAPVPAAPFKASVEPRVEPTPRPIPPPPPSKTASAPG) are disordered. Pro residues predominate over residues 36–46 (TPRPIPPPPPS). ATP-binding positions include Tyr-55, Asn-95, Asp-122, 164 to 170 (GLHGVGA), and Lys-397. The region spanning 477-591 (AELFIVEGDS…GGHLFLALPP (115 aa)) is the Toprim domain. 3 residues coordinate Mg(2+): Glu-483, Asp-556, and Asp-558.

The protein belongs to the type II topoisomerase family. ParE type 1 subfamily. As to quaternary structure, heterotetramer composed of ParC and ParE. Requires Mg(2+) as cofactor. The cofactor is Mn(2+). Ca(2+) is required as a cofactor.

The catalysed reaction is ATP-dependent breakage, passage and rejoining of double-stranded DNA.. Topoisomerase IV is essential for chromosome segregation. It relaxes supercoiled DNA. Performs the decatenation events required during the replication of a circular DNA molecule. This is DNA topoisomerase 4 subunit B from Caulobacter vibrioides (strain ATCC 19089 / CIP 103742 / CB 15) (Caulobacter crescentus).